Reading from the N-terminus, the 344-residue chain is AA9 family lytic polysaccharide monooxygenase D (344 aa).

Positions 1 to 23 (MKTATSYAAFLLSALAALPHASA) are cleaved as a signal peptide. His-24 lines the Cu(2+) pocket. A disulfide bond links Cys-70 and Cys-193. His-179 lines the O2 pocket. Tyr-190 serves as a coordination point for Cu(2+). N-linked (GlcNAc...) asparagine glycosylation is found at Asn-201 and Asn-207. Residues 240-321 (PPLSNLVSGD…PTTSGNLSAN (82 aa)) form a disordered region. Residues 259 to 292 (STSSATLSGGAAPTGTASGSTPAGTSQPSSTTGT) show a composition bias toward low complexity. Residues 311-320 (APTTSGNLSA) are compositionally biased toward polar residues. A glycan (N-linked (GlcNAc...) asparagine) is linked at Asn-317.

Belongs to the polysaccharide monooxygenase AA9 family. Cu(2+) is required as a cofactor.

Its subcellular location is the secreted. It catalyses the reaction [(1-&gt;4)-beta-D-glucosyl]n+m + reduced acceptor + O2 = 4-dehydro-beta-D-glucosyl-[(1-&gt;4)-beta-D-glucosyl]n-1 + [(1-&gt;4)-beta-D-glucosyl]m + acceptor + H2O.. In terms of biological role, lytic polysaccharide monooxygenase (LPMO) that depolymerizes crystalline and amorphous polysaccharides via the oxidation of scissile alpha- or beta-(1-4)-glycosidic bonds, yielding C1 or C4 oxidation products. Catalysis by LPMOs requires the reduction of the active-site copper from Cu(II) to Cu(I) by a reducing agent and H(2)O(2) or O(2) as a cosubstrate. In Gloeophyllum trabeum (strain ATCC 11539 / FP-39264 / Madison 617) (Brown rot fungus), this protein is AA9 family lytic polysaccharide monooxygenase D.